Consider the following 215-residue polypeptide: MSKVYDWFNDRLEIQGIADDITSKYVPPHVNIFYCIGGITFTCFIMQVASGFAMTFYYRPTVTEAFASVQYIMTDVNFGWLIRSIHKWSASMMVLTMILHVFRVYLTGGFKKPRELTWVTGVILAVCTVSFGVTGYSLPWDQVGYWAVKIVTGVPDAIPVIGAPLVELLRGGVGVGQSTLTRFYSLHTFVLPLLTAVFMLAHFLMIRKQGISGPL.

Residues 32–52 (IFYCIGGITFTCFIMQVASGF) traverse the membrane as a helical segment. Cys35 contributes to the heme c binding site. Residues His86 and His100 each contribute to the heme b site. 3 helical membrane passes run 90-110 (ASMM…TGGF), 116-136 (LTWV…VTGY), and 186-206 (LHTF…FLMI). Heme b-binding residues include His187 and His202.

The protein belongs to the cytochrome b family. PetB subfamily. In terms of assembly, the 4 large subunits of the cytochrome b6-f complex are cytochrome b6, subunit IV (17 kDa polypeptide, PetD), cytochrome f and the Rieske protein, while the 4 small subunits are PetG, PetL, PetM and PetN. The complex functions as a dimer. Requires heme b as cofactor. The cofactor is heme c.

The protein localises to the plastid. The protein resides in the chloroplast thylakoid membrane. Component of the cytochrome b6-f complex, which mediates electron transfer between photosystem II (PSII) and photosystem I (PSI), cyclic electron flow around PSI, and state transitions. This chain is Cytochrome b6, found in Mesostigma viride (Green alga).